The primary structure comprises 425 residues: Serine--tRNA ligase (425 aa).

L-serine is bound at residue 233-235; it reads TAE. Residue 264–266 participates in ATP binding; that stretch reads RRE. Glu287 is an L-serine binding site. 351-354 serves as a coordination point for ATP; the sequence is EISS. Ser387 is an L-serine binding site.

Belongs to the class-II aminoacyl-tRNA synthetase family. Type-1 seryl-tRNA synthetase subfamily. In terms of assembly, homodimer. The tRNA molecule binds across the dimer.

It localises to the cytoplasm. The enzyme catalyses tRNA(Ser) + L-serine + ATP = L-seryl-tRNA(Ser) + AMP + diphosphate + H(+). It carries out the reaction tRNA(Sec) + L-serine + ATP = L-seryl-tRNA(Sec) + AMP + diphosphate + H(+). The protein operates within aminoacyl-tRNA biosynthesis; selenocysteinyl-tRNA(Sec) biosynthesis; L-seryl-tRNA(Sec) from L-serine and tRNA(Sec): step 1/1. Its function is as follows. Catalyzes the attachment of serine to tRNA(Ser). Is also able to aminoacylate tRNA(Sec) with serine, to form the misacylated tRNA L-seryl-tRNA(Sec), which will be further converted into selenocysteinyl-tRNA(Sec). The chain is Serine--tRNA ligase from Thermotoga sp. (strain RQ2).